The following is an 809-amino-acid chain: Lon protease (809 aa).

The Lon N-terminal domain occupies 20–216 (LPLLALRDVV…ELMNYLMNQS (197 aa)). ATP is bound at residue 369 to 376 (GPPGVGKT). One can recognise a Lon proteolytic domain in the interval 606 to 787 (EAQVGRVNGL…DEILPLALTS (182 aa)). Active-site residues include Ser-693 and Lys-736.

This sequence belongs to the peptidase S16 family. Homohexamer. Organized in a ring with a central cavity.

Its subcellular location is the cytoplasm. The catalysed reaction is Hydrolysis of proteins in presence of ATP.. ATP-dependent serine protease that mediates the selective degradation of mutant and abnormal proteins as well as certain short-lived regulatory proteins. Required for cellular homeostasis and for survival from DNA damage and developmental changes induced by stress. Degrades polypeptides processively to yield small peptide fragments that are 5 to 10 amino acids long. Binds to DNA in a double-stranded, site-specific manner. The chain is Lon protease from Acinetobacter baumannii (strain AB307-0294).